The primary structure comprises 206 residues: Large ribosomal subunit protein uL4 (206 aa).

The tract at residues 46–77 (GTRAQKDREQVKHSTKKPFKQKGTGRARAGMT) is disordered. The segment covering 58–70 (HSTKKPFKQKGTG) has biased composition (basic residues).

This sequence belongs to the universal ribosomal protein uL4 family. In terms of assembly, part of the 50S ribosomal subunit.

In terms of biological role, one of the primary rRNA binding proteins, this protein initially binds near the 5'-end of the 23S rRNA. It is important during the early stages of 50S assembly. It makes multiple contacts with different domains of the 23S rRNA in the assembled 50S subunit and ribosome. Functionally, forms part of the polypeptide exit tunnel. This is Large ribosomal subunit protein uL4 from Albidiferax ferrireducens (strain ATCC BAA-621 / DSM 15236 / T118) (Rhodoferax ferrireducens).